The chain runs to 225 residues: Transcriptional activator protein BglJ (225 aa).

The 66-residue stretch at 146–211 folds into the HTH luxR-type domain; the sequence is YINQSRTLSP…GLLEAADILL (66 aa). Residues 170–189 constitute a DNA-binding region (H-T-H motif); the sequence is MTQIAEQLKRNIKTIRAHKF.

Forms a complex with RcsB; genetically both BglJ and RcsB are required to relieve bgl operon repression by H-NS and by StpA.

Its function is as follows. A crytic transcriptional activator. When its expression is induced it relieves H-NS repression of the bgl operon. Acts independently of transcription factor LeuO. The polypeptide is Transcriptional activator protein BglJ (bglJ) (Escherichia coli (strain K12)).